The primary structure comprises 51 residues: uncharacterized protein (51 aa).

This is an uncharacterized protein from Treponema pallidum (strain Nichols).